The primary structure comprises 291 residues: Protease HtpX homolog (291 aa).

The next 2 membrane-spanning stretches (helical) occupy residues 4-24 and 38-58; these read IALF…VASL and LGAL…ISLL. Position 144 (H144) interacts with Zn(2+). E145 is an active-site residue. Residue H148 coordinates Zn(2+). Helical transmembrane passes span 159-179 and 199-219; these read LIQG…GYAV and VTTI…VAWF. Zn(2+) is bound at residue E224.

This sequence belongs to the peptidase M48B family. Requires Zn(2+) as cofactor.

It localises to the cell inner membrane. The polypeptide is Protease HtpX homolog (Paracidovorax citrulli (strain AAC00-1) (Acidovorax citrulli)).